The primary structure comprises 120 residues: Aspartate 1-decarboxylase (120 aa).

Serine 25 acts as the Schiff-base intermediate with substrate; via pyruvic acid in catalysis. Serine 25 bears the Pyruvic acid (Ser) mark. Threonine 57 serves as a coordination point for substrate. Tyrosine 58 serves as the catalytic Proton donor. Residue 72 to 74 (GAA) coordinates substrate.

The protein belongs to the PanD family. As to quaternary structure, heterooctamer of four alpha and four beta subunits. The cofactor is pyruvate. Is synthesized initially as an inactive proenzyme, which is activated by self-cleavage at a specific serine bond to produce a beta-subunit with a hydroxyl group at its C-terminus and an alpha-subunit with a pyruvoyl group at its N-terminus.

It localises to the cytoplasm. The catalysed reaction is L-aspartate + H(+) = beta-alanine + CO2. It participates in cofactor biosynthesis; (R)-pantothenate biosynthesis; beta-alanine from L-aspartate: step 1/1. In terms of biological role, catalyzes the pyruvoyl-dependent decarboxylation of aspartate to produce beta-alanine. The polypeptide is Aspartate 1-decarboxylase (Helicobacter hepaticus (strain ATCC 51449 / 3B1)).